A 402-amino-acid polypeptide reads, in one-letter code: Phosphoglycerate kinase (402 aa).

Residues Asp24–Asn26, Arg40, His63–Arg66, Arg122, and Arg155 each bind substrate. ATP-binding positions include Lys206, Gly297, Glu328, and Gly358–Ser361.

It belongs to the phosphoglycerate kinase family. As to quaternary structure, monomer.

Its subcellular location is the cytoplasm. The catalysed reaction is (2R)-3-phosphoglycerate + ATP = (2R)-3-phospho-glyceroyl phosphate + ADP. It participates in carbohydrate degradation; glycolysis; pyruvate from D-glyceraldehyde 3-phosphate: step 2/5. In Prochlorococcus marinus (strain MIT 9515), this protein is Phosphoglycerate kinase.